The chain runs to 500 residues: MGRVGLGVAVGCAAVTCAIAAALVARRASARARWRRAVALLREFEEGCATPPARLRQVVDAMVVEMHAGLASDGGSKLKMLLTFVDALPSGSEEGVYYSIDLGGTNFRVLRVQVGAGSVIVNQKVEQQPIPEELTKGTTEGLFNFVALALKNFLEGEDDQDGKMALGFTFSFPVRQISVSSGSLIRWTKGFSIRDTVGRDVAQCLNEALANCGLNVRVTALVNDTVGTLALGHYYDEDTVAAVIIGSGTNACYIERTDAIIKCQGLLTNSGGMVVNMEWGNFWSSHLPRTPYDILLDDETHNRNDQGFEKMISGMYLGEIARLVFHRMAQESDVFGDAADSLSNPFILSTPFLAAIREDDSPDLSEVRRILREHLKIPDAPLKTRRLVVKVCDIVTRRAARLAAAGIVGILKKLGRDGSGAASSGRGRGQPRRTVVAIEGGLYQGYPVFREYLDEALVEILGEEVARNVTLRVTEDGSGVGAALLAAVHSSNRQQQGGPI.

Residues 4 to 24 (VGLGVAVGCAAVTCAIAAALV) traverse the membrane as a helical segment. In terms of domain architecture, Hexokinase spans 35–487 (RRAVALLREF…SGVGAALLAA (453 aa)). The interval 90-222 (SGSEEGVYYS…GLNVRVTALV (133 aa)) is hexokinase small subdomain. Glycine 104, threonine 105, and asparagine 106 together coordinate ADP. The D-glucose site is built by threonine 188, lysine 189, asparagine 223, and aspartate 224. The interval 223-476 (NDTVGTLALG…RNVTLRVTED (254 aa)) is hexokinase large subdomain. Serine 247 is an ADP binding site. The D-glucose site is built by asparagine 250, glutamate 278, and glutamate 309. Glycine 441 serves as a coordination point for ADP.

Belongs to the hexokinase family. In terms of tissue distribution, expressed in roots, leaves, flowers, immature seeds and seed coat. Expressed in young shoots, tiller buds, endosperm seven days after fertilization, and interconnecting tissues such as pulvini and nodes.

It localises to the mitochondrion outer membrane. The enzyme catalyses a D-hexose + ATP = a D-hexose 6-phosphate + ADP + H(+). It carries out the reaction D-fructose + ATP = D-fructose 6-phosphate + ADP + H(+). It catalyses the reaction D-glucose + ATP = D-glucose 6-phosphate + ADP + H(+). Its pathway is carbohydrate metabolism; hexose metabolism. It functions in the pathway carbohydrate degradation; glycolysis; D-glyceraldehyde 3-phosphate and glycerone phosphate from D-glucose: step 1/4. Fructose and glucose phosphorylating enzyme. Involved in the regulation of cell expansion in spikelet hulls, grain size, and gibberellin biosynthesis and homeostasis. In Oryza sativa subsp. japonica (Rice), this protein is Hexokinase-3.